The primary structure comprises 292 residues: MPLIPWPASADDSSKGKDDEKDIATKAKELFALAGEIPPEYFSVAAFAAGSLSLAASYFVHKRYFRRIPNAEWVSPNHLARKRWIKGRVTSVGDNDNFRFYHTPGIGWRWPLKFRRVPTLTKELKDQTIHVRIAGVDAPENAHFGRPAQPYAQEALAYLRARILGKTVFCQLIRRDQYGRMVSHVRLAPRFLPATLFRGPNLAEDMLRKGWATTYEQHGAEYGEGGVERYKQIEQEAKDARRGIWAKGVRGETPAEYKRRYAQAADGGEPPSKARAEKEQKRGWLQRLFSWK.

A helical transmembrane segment spans residues 41–58; sequence YFSVAAFAAGSLSLAASY. The TNase-like domain occupies 83 to 247; sequence RWIKGRVTSV…KDARRGIWAK (165 aa). Residue R132 is part of the active site. Residue D137 coordinates Ca(2+). Catalysis depends on residues E140 and R180. Positions 256–282 are disordered; sequence EYKRRYAQAADGGEPPSKARAEKEQKR. Residues 272 to 282 show a composition bias toward basic and acidic residues; the sequence is SKARAEKEQKR.

Belongs to the LCL3 family.

Its subcellular location is the mitochondrion. The protein resides in the membrane. The chain is Probable endonuclease LCL3 (LCL3) from Schizophyllum commune (strain H4-8 / FGSC 9210) (Split gill fungus).